Consider the following 554-residue polypeptide: Polyamine aminopropyltransferase 2 (554 aa).

Pro residues predominate over residues 1 to 13; that stretch reads MIEPHAPAPPGSP. The interval 1-20 is disordered; the sequence is MIEPHAPAPPGSPPSWGGPC. 6 helical membrane-spanning segments follow: residues 37 to 57, 69 to 89, 106 to 126, 139 to 159, 184 to 204, and 206 to 226; these read FLVL…ELEL, VTQA…GSLA, AALA…FAWT, ILLV…VPLL, VGAL…LGQL, and GALL…LGLF. The segment at 235–516 is spermidine synthase; it reads RWLLLTANAV…RTAPAPRLDP (282 aa). In terms of domain architecture, PABS spans 247 to 492; that stretch reads ALLATATVLA…SVPGPRRAAA (246 aa). Residue Gln-281 participates in S-methyl-5'-thioadenosine binding. Residues His-313 and Asp-335 each contribute to the spermidine site. S-methyl-5'-thioadenosine-binding positions include Glu-355 and 389–390; that span reads DA. Asp-408 serves as the catalytic Proton acceptor. Residues 476–495 form a disordered region; sequence DTGPGPGSVPGPRRAAAGPP. Over residues 485–495 the composition is skewed to low complexity; it reads PGPRRAAAGPP.

Belongs to the spermidine/spermine synthase family. As to quaternary structure, homodimer or homotetramer.

The protein localises to the cell membrane. The enzyme catalyses S-adenosyl 3-(methylsulfanyl)propylamine + putrescine = S-methyl-5'-thioadenosine + spermidine + H(+). Its pathway is amine and polyamine biosynthesis; spermidine biosynthesis; spermidine from putrescine: step 1/1. Functionally, catalyzes the irreversible transfer of a propylamine group from the amino donor S-adenosylmethioninamine (decarboxy-AdoMet) to putrescine (1,4-diaminobutane) to yield spermidine. The sequence is that of Polyamine aminopropyltransferase 2 from Streptomyces coelicolor (strain ATCC BAA-471 / A3(2) / M145).